The primary structure comprises 282 residues: Bifunctional protein FolD (282 aa).

NADP(+) is bound by residues 165-167 (GAS) and isoleucine 231.

This sequence belongs to the tetrahydrofolate dehydrogenase/cyclohydrolase family. As to quaternary structure, homodimer.

The catalysed reaction is (6R)-5,10-methylene-5,6,7,8-tetrahydrofolate + NADP(+) = (6R)-5,10-methenyltetrahydrofolate + NADPH. It carries out the reaction (6R)-5,10-methenyltetrahydrofolate + H2O = (6R)-10-formyltetrahydrofolate + H(+). The protein operates within one-carbon metabolism; tetrahydrofolate interconversion. Its function is as follows. Catalyzes the oxidation of 5,10-methylenetetrahydrofolate to 5,10-methenyltetrahydrofolate and then the hydrolysis of 5,10-methenyltetrahydrofolate to 10-formyltetrahydrofolate. This Francisella tularensis subsp. tularensis (strain FSC 198) protein is Bifunctional protein FolD.